Here is a 209-residue protein sequence, read N- to C-terminus: Orotate phosphoribosyltransferase (209 aa).

Residues R96, K100, H102, and E122–S130 each bind 5-phospho-alpha-D-ribose 1-diphosphate. S126 provides a ligand contact to orotate.

Belongs to the purine/pyrimidine phosphoribosyltransferase family. PyrE subfamily. As to quaternary structure, homodimer. The cofactor is Mg(2+).

The catalysed reaction is orotidine 5'-phosphate + diphosphate = orotate + 5-phospho-alpha-D-ribose 1-diphosphate. It functions in the pathway pyrimidine metabolism; UMP biosynthesis via de novo pathway; UMP from orotate: step 1/2. In terms of biological role, catalyzes the transfer of a ribosyl phosphate group from 5-phosphoribose 1-diphosphate to orotate, leading to the formation of orotidine monophosphate (OMP). The polypeptide is Orotate phosphoribosyltransferase (Listeria monocytogenes serotype 4b (strain F2365)).